The following is a 180-amino-acid chain: Ribulose bisphosphate carboxylase small subunit 1A, chloroplastic (180 aa).

Residues 1–54 (MASSMLSSATMVASPAQATMVAPFNGLKSSAAFPATRKANNDITSITSNGGRVN) constitute a chloroplast transit peptide. The residue at position 113 (Ser113) is a Phosphoserine.

The protein belongs to the RuBisCO small chain family. Heterohexadecamer of 8 large and 8 small subunits.

The protein resides in the plastid. It localises to the chloroplast membrane. The protein localises to the chloroplast stroma. RuBisCO catalyzes two reactions: the carboxylation of D-ribulose 1,5-bisphosphate, the primary event in carbon dioxide fixation, as well as the oxidative fragmentation of the pentose substrate. Both reactions occur simultaneously and in competition at the same active site. Although the small subunit is not catalytic it is essential for maximal activity. This chain is Ribulose bisphosphate carboxylase small subunit 1A, chloroplastic (RBCS-1A), found in Arabidopsis thaliana (Mouse-ear cress).